The chain runs to 364 residues: Ribosomal RNA large subunit methyltransferase M (364 aa).

Residues S198, 231–234, D250, D270, and D286 contribute to the S-adenosyl-L-methionine site; that span reads APGG. K315 serves as the catalytic Proton acceptor.

The protein belongs to the class I-like SAM-binding methyltransferase superfamily. RNA methyltransferase RlmE family. RlmM subfamily. In terms of assembly, monomer.

The protein localises to the cytoplasm. It carries out the reaction cytidine(2498) in 23S rRNA + S-adenosyl-L-methionine = 2'-O-methylcytidine(2498) in 23S rRNA + S-adenosyl-L-homocysteine + H(+). Catalyzes the 2'-O-methylation at nucleotide C2498 in 23S rRNA. The polypeptide is Ribosomal RNA large subunit methyltransferase M (Thauera aminoaromatica).